A 340-amino-acid polypeptide reads, in one-letter code: Replication factor C subunit 2 (340 aa).

Gly-59–Thr-66 serves as a coordination point for ATP.

This sequence belongs to the activator 1 small subunits family. As to quaternary structure, heteropentamer of subunits rfc1, rfc2, rfc3, rfc4 and rfc5 that forms a complex (RFC) with PCNA in the presence of ATP. Two other complexes exist where rfc1 can be replaced by either ctf18 or elg1 to form the ctf18-RFC or the elg1-RFC complexes respectively.

It is found in the nucleus. Functionally, the elongation of primed DNA templates by DNA polymerase delta and epsilon requires the action of the accessory proteins PCNA and activator 1. Subunit 2 binds ATP and single-stranded DNA. The polypeptide is Replication factor C subunit 2 (rfc2) (Schizosaccharomyces pombe (strain 972 / ATCC 24843) (Fission yeast)).